Here is a 359-residue protein sequence, read N- to C-terminus: UDP-N-acetylglucosamine--N-acetylmuramyl-(pentapeptide) pyrophosphoryl-undecaprenol N-acetylglucosamine transferase (359 aa).

UDP-N-acetyl-alpha-D-glucosamine is bound by residues 15-17, Asn-127, Arg-166, Ser-191, Ile-245, 264-269, and Gln-290; these read TGG and ALTVSE.

This sequence belongs to the glycosyltransferase 28 family. MurG subfamily.

Its subcellular location is the cell inner membrane. The enzyme catalyses di-trans,octa-cis-undecaprenyl diphospho-N-acetyl-alpha-D-muramoyl-L-alanyl-D-glutamyl-meso-2,6-diaminopimeloyl-D-alanyl-D-alanine + UDP-N-acetyl-alpha-D-glucosamine = di-trans,octa-cis-undecaprenyl diphospho-[N-acetyl-alpha-D-glucosaminyl-(1-&gt;4)]-N-acetyl-alpha-D-muramoyl-L-alanyl-D-glutamyl-meso-2,6-diaminopimeloyl-D-alanyl-D-alanine + UDP + H(+). It participates in cell wall biogenesis; peptidoglycan biosynthesis. Functionally, cell wall formation. Catalyzes the transfer of a GlcNAc subunit on undecaprenyl-pyrophosphoryl-MurNAc-pentapeptide (lipid intermediate I) to form undecaprenyl-pyrophosphoryl-MurNAc-(pentapeptide)GlcNAc (lipid intermediate II). The protein is UDP-N-acetylglucosamine--N-acetylmuramyl-(pentapeptide) pyrophosphoryl-undecaprenol N-acetylglucosamine transferase of Pseudomonas putida (strain W619).